Consider the following 2967-residue polypeptide: BEACH domain-containing protein lvsD (2967 aa).

10 disordered regions span residues 1–25, 322–364, 588–615, 917–936, 1077–1105, 1173–1220, 1583–1613, 1831–1859, 1921–2009, and 2029–2062; these read MSSP…RIGG, NNNN…SSNS, ILSI…QQQL, NNSN…NNIN, GGSN…KDKD, NTSS…SDHR, NNNS…NNEN, QQQQ…SSVV, PQKT…TLNN, and KSTL…NNKN. The 263-residue stretch at 229–491 folds into the BEACH 1 domain; it reads MTFRKAPSSV…QDLFRKGSNY (263 aa). Over residues 1079–1092 the composition is skewed to low complexity; sequence SNNNNNNNNNNSNN. The segment covering 1093–1105 has biased composition (basic and acidic residues); the sequence is NKDKIDSNNKDKD. 6 stretches are compositionally biased toward low complexity: residues 1185-1194, 1583-1611, 1831-1857, 1926-1980, 1993-2006, and 2034-2062; these read PLLTSTKSMS, NNNS…LNNN, QQQQ…SSSS, QNQH…SFSN, NIIT…TTST, and SSSS…NNKN. Residues 2060–2162 enclose the BEACH-type PH domain; that stretch reads NKNIKLEFST…ICAQILKLIG (103 aa). BEACH domains follow at residues 2202–2492 and 2628–2785; these read TPQQ…HPQR and NSRV…IYSN. WD repeat units lie at residues 2658–2710 and 2720–2761; these read NHKS…SDHH and GHNF…KSIQ. Disordered regions lie at residues 2798-2820 and 2915-2934; these read SATT…SSNT and PSTS…NNGN. Composition is skewed to low complexity over residues 2811–2820 and 2924–2934; these read SSSSLSSSNT and NSNNNNNNNGN.

In Dictyostelium discoideum (Social amoeba), this protein is BEACH domain-containing protein lvsD (lvsD).